The following is a 301-amino-acid chain: uncharacterized protein (301 aa).

Residues serine 44 and tyrosine 107 each act as charge relay system in the active site. Tyrosine 133 serves as the catalytic Proton donor. The Schiff-base intermediate with substrate role is filled by lysine 162.

It belongs to the DapA family. Homotetramer.

It localises to the cytoplasm. This is an uncharacterized protein from Pyrobaculum arsenaticum (strain DSM 13514 / JCM 11321 / PZ6).